The sequence spans 76 residues: MQLVLAGKYIGAGLASIGLVGAGIGIAIVFAALINGVSRNPALKGQLFTYSILGFALSEATGLFALMIAFLLLYAV.

Met1 bears the N-formylmethionine mark. Helical transmembrane passes span 14–34 and 52–72; these read LASI…AALI and ILGF…AFLL.

In terms of assembly, F-type ATP synthases have 2 components, the catalytic core F(1) and the membrane-embedded component F(0), linked together by a central stalk and a peripheral stalk. The central stalk, also called rotor shaft, is often seen as part of F(1). The peripheral stalk is seen as part of F(0). F(0) contains the membrane channel next to the rotor. F-type ATP synthases form dimers but each monomer functions independently in ATP generation. The dimer consists of 17 different polypeptides: ATP1 (subunit alpha, 3 molecules per monomer, part of F(1)), ATP2 (subunit beta, 3 copies per monomer, part of F(1)), ATP3 (subunit gamma, part of the central stalk), ATP4 (subunit b, part of the peripheral stalk), ATP5/OSCP (subunit 5/OSCP, part of the peripheral stalk), ATP6 (subunit a, part of the peripheral stalk), ATP7 (subunit d, part of the peripheral stalk), ATP8 (subunit 8, part of the peripheral stalk), OLI1 (subunit c, part of the rotor, 10 molecules per monomer), ATP14 (subunit h, part of the peripheral stalk), ATP15 (subunit epsilon, part of the central stalk), ATP16 (subunit delta, part of the central stalk), ATP17 (subunit f, part of the peripheral stalk), ATP18 (subunit i/j, part of the peripheral stalk), ATP19 (subunit k, dimer-specific, at interface between monomers), ATP20 (subunit g, at interface between monomers), TIM11 (subunit e, at interface between monomers).

The protein localises to the mitochondrion inner membrane. Mitochondrial membrane ATP synthase (F(1)F(0) ATP synthase or Complex V) produces ATP from ADP in the presence of a proton gradient across the membrane which is generated by electron transport complexes of the respiratory chain. F-type ATP synthases consist of two structural domains, F(1) - containing the extramembraneous catalytic core, and F(0) - containing the membrane proton channel, linked together by a central stalk and a peripheral stalk. During catalysis, ATP synthesis in the catalytic domain of F(1) is coupled via a rotary mechanism of the central stalk subunits to proton translocation. Part of the complex F(0) domain. A homomeric c-ring of 10 OLI1/ATP9 subunits is part of the complex rotary element. This is ATP synthase subunit 9, mitochondrial from Yarrowia lipolytica (strain CLIB 122 / E 150) (Yeast).